A 460-amino-acid chain; its full sequence is ATP synthase subunit beta (460 aa).

150–157 contacts ATP; the sequence is GGAGVGKT.

Belongs to the ATPase alpha/beta chains family. F-type ATPases have 2 components, CF(1) - the catalytic core - and CF(0) - the membrane proton channel. CF(1) has five subunits: alpha(3), beta(3), gamma(1), delta(1), epsilon(1). CF(0) has three main subunits: a(1), b(2) and c(9-12). The alpha and beta chains form an alternating ring which encloses part of the gamma chain. CF(1) is attached to CF(0) by a central stalk formed by the gamma and epsilon chains, while a peripheral stalk is formed by the delta and b chains.

It is found in the cell inner membrane. The enzyme catalyses ATP + H2O + 4 H(+)(in) = ADP + phosphate + 5 H(+)(out). Produces ATP from ADP in the presence of a proton gradient across the membrane. The catalytic sites are hosted primarily by the beta subunits. The protein is ATP synthase subunit beta of Edwardsiella ictaluri (strain 93-146).